A 791-amino-acid chain; its full sequence is Phenylalanine--tRNA ligase beta subunit (791 aa).

Positions 39–148 (AADFSGVVVA…ADAPVGADIR (110 aa)) constitute a tRNA-binding domain. Residues 401-476 (PLRAPVRLRE…RVYGYDAIPR (76 aa)) form the B5 domain. Mg(2+)-binding residues include D454, D460, E463, and E464. Positions 697–790 (SRFPLVRRDL…LAADFGAKLR (94 aa)) constitute an FDX-ACB domain.

This sequence belongs to the phenylalanyl-tRNA synthetase beta subunit family. Type 1 subfamily. In terms of assembly, tetramer of two alpha and two beta subunits. The cofactor is Mg(2+).

It is found in the cytoplasm. It catalyses the reaction tRNA(Phe) + L-phenylalanine + ATP = L-phenylalanyl-tRNA(Phe) + AMP + diphosphate + H(+). The chain is Phenylalanine--tRNA ligase beta subunit from Methylococcus capsulatus (strain ATCC 33009 / NCIMB 11132 / Bath).